The following is a 219-amino-acid chain: 3-demethoxyubiquinol 3-hydroxylase (219 aa).

The interval 21 to 51 (RTLTPGTTQAERTPAHAAPAPDAPEAGTLPS) is disordered. Positions 35–46 (AHAAPAPDAPEA) are enriched in low complexity. Positions 68, 98, 101, 150, 182, and 185 each coordinate Fe cation.

It belongs to the COQ7 family. Fe cation is required as a cofactor.

The protein resides in the cell membrane. The enzyme catalyses a 5-methoxy-2-methyl-3-(all-trans-polyprenyl)benzene-1,4-diol + AH2 + O2 = a 3-demethylubiquinol + A + H2O. Its pathway is cofactor biosynthesis; ubiquinone biosynthesis. In terms of biological role, catalyzes the hydroxylation of 2-nonaprenyl-3-methyl-6-methoxy-1,4-benzoquinol during ubiquinone biosynthesis. This chain is 3-demethoxyubiquinol 3-hydroxylase, found in Alcanivorax borkumensis (strain ATCC 700651 / DSM 11573 / NCIMB 13689 / SK2).